Reading from the N-terminus, the 197-residue chain is Phosphoheptose isomerase (197 aa).

The 159-residue stretch at 34–192 (MVNALINGNK…CEGVDDCLFP (159 aa)) folds into the SIS domain. Substrate is bound by residues 49–51 (NGG), Gln-62, 91–92 (ND), Ser-122, and His-172. Gln-62 is a Zn(2+) binding site. Residues His-172 and His-180 each coordinate Zn(2+).

The protein belongs to the SIS family. GmhA subfamily. In terms of assembly, homotetramer. The cofactor is Zn(2+).

The protein localises to the cytoplasm. It catalyses the reaction 2 D-sedoheptulose 7-phosphate = D-glycero-alpha-D-manno-heptose 7-phosphate + D-glycero-beta-D-manno-heptose 7-phosphate. It participates in carbohydrate biosynthesis; D-glycero-D-manno-heptose 7-phosphate biosynthesis; D-glycero-alpha-D-manno-heptose 7-phosphate and D-glycero-beta-D-manno-heptose 7-phosphate from sedoheptulose 7-phosphate: step 1/1. In terms of biological role, catalyzes the isomerization of sedoheptulose 7-phosphate in D-glycero-D-manno-heptose 7-phosphate. The protein is Phosphoheptose isomerase of Pseudoalteromonas atlantica (strain T6c / ATCC BAA-1087).